We begin with the raw amino-acid sequence, 199 residues long: NADH-quinone oxidoreductase subunit C (199 aa).

Belongs to the complex I 30 kDa subunit family. In terms of assembly, NDH-1 is composed of 14 different subunits. Subunits NuoB, C, D, E, F, and G constitute the peripheral sector of the complex.

Its subcellular location is the cell inner membrane. The enzyme catalyses a quinone + NADH + 5 H(+)(in) = a quinol + NAD(+) + 4 H(+)(out). In terms of biological role, NDH-1 shuttles electrons from NADH, via FMN and iron-sulfur (Fe-S) centers, to quinones in the respiratory chain. The immediate electron acceptor for the enzyme in this species is believed to be ubiquinone. Couples the redox reaction to proton translocation (for every two electrons transferred, four hydrogen ions are translocated across the cytoplasmic membrane), and thus conserves the redox energy in a proton gradient. The protein is NADH-quinone oxidoreductase subunit C of Rhodopseudomonas palustris (strain BisB18).